The chain runs to 185 residues: Peptidyl-tRNA hydrolase (185 aa).

Residue Tyr14 coordinates tRNA. Catalysis depends on His19, which acts as the Proton acceptor. The tRNA site is built by Phe63, Asn65, and Asn111.

It belongs to the PTH family. Monomer.

Its subcellular location is the cytoplasm. It catalyses the reaction an N-acyl-L-alpha-aminoacyl-tRNA + H2O = an N-acyl-L-amino acid + a tRNA + H(+). Functionally, hydrolyzes ribosome-free peptidyl-tRNAs (with 1 or more amino acids incorporated), which drop off the ribosome during protein synthesis, or as a result of ribosome stalling. In terms of biological role, catalyzes the release of premature peptidyl moieties from peptidyl-tRNA molecules trapped in stalled 50S ribosomal subunits, and thus maintains levels of free tRNAs and 50S ribosomes. In Desulfitobacterium hafniense (strain Y51), this protein is Peptidyl-tRNA hydrolase.